The following is a 161-amino-acid chain: Type IV major fimbrial protein FimA (161 aa).

A propeptide spans 1–7 (MKSLQKG) (leader sequence). Phe8 carries the N-methylphenylalanine modification. A helical membrane pass occupies residues 8–28 (FTLIELMIVVAIIGILAAFAI). A disulfide bridge links Cys63 with Cys105.

It belongs to the N-Me-Phe pilin family. As to quaternary structure, the pili are polar flexible filaments of about 5.4 nanometers diameter and 2.5 micrometers average length; they consist of only a single polypeptide chain arranged in a helical configuration of five subunits per turn in the assembled pilus.

Its subcellular location is the fimbrium. The protein localises to the membrane. Major component of the type IV fimbriae that plays an essential role in twitching motility, natural transformation, and protease secretion. This Dichelobacter nodosus (Bacteroides nodosus) protein is Type IV major fimbrial protein FimA (fimA).